The primary structure comprises 93 residues: Cobalt transport protein CbiN (93 aa).

The next 2 membrane-spanning stretches (helical) occupy residues L5 to G25 and L63 to A83.

This sequence belongs to the CbiN family. As to quaternary structure, forms an energy-coupling factor (ECF) transporter complex composed of an ATP-binding protein (A component, CbiO), a transmembrane protein (T component, CbiQ) and 2 possible substrate-capture proteins (S components, CbiM and CbiN) of unknown stoichimetry.

It is found in the cell inner membrane. It functions in the pathway cofactor biosynthesis; adenosylcobalamin biosynthesis. Functionally, part of the energy-coupling factor (ECF) transporter complex CbiMNOQ involved in cobalt import. The protein is Cobalt transport protein CbiN of Klebsiella pneumoniae (strain 342).